The sequence spans 717 residues: DNA ligase (717 aa).

NAD(+) is bound by residues 44–48, 93–94, and Glu-127; these read DADYD and SL. Lys-129 acts as the N6-AMP-lysine intermediate in catalysis. NAD(+) is bound by residues Arg-150, Glu-186, Lys-302, and Lys-326. Residues Cys-431, Cys-434, Cys-455, and Cys-461 each coordinate Zn(2+). A BRCT domain is found at 639 to 717; that stretch reads ATDSPVAGKT…EDEWLALIGG (79 aa).

The protein belongs to the NAD-dependent DNA ligase family. LigA subfamily. It depends on Mg(2+) as a cofactor. Requires Mn(2+) as cofactor.

It carries out the reaction NAD(+) + (deoxyribonucleotide)n-3'-hydroxyl + 5'-phospho-(deoxyribonucleotide)m = (deoxyribonucleotide)n+m + AMP + beta-nicotinamide D-nucleotide.. In terms of biological role, DNA ligase that catalyzes the formation of phosphodiester linkages between 5'-phosphoryl and 3'-hydroxyl groups in double-stranded DNA using NAD as a coenzyme and as the energy source for the reaction. It is essential for DNA replication and repair of damaged DNA. This chain is DNA ligase, found in Rhizobium meliloti (strain 1021) (Ensifer meliloti).